The sequence spans 77 residues: Putative antitoxin VapB3 (77 aa).

Residues 10-60 (RRGLKKELEELGINYAEAVRKFLEELVARERRRRALERARALREELRKKGA) are a coiled coil.

As to quaternary structure, forms a complex with putative toxin VapC3, possibly VapB(2)-VapC(2).

Functionally, antitoxin component of a type II toxin-antitoxin (TA) system. This Pyrobaculum aerophilum (strain ATCC 51768 / DSM 7523 / JCM 9630 / CIP 104966 / NBRC 100827 / IM2) protein is Putative antitoxin VapB3 (vAPb3).